The sequence spans 344 residues: Anthranilate phosphoribosyltransferase (344 aa).

Residues glycine 80, 83–84, threonine 88, 90–93, 108–116, and serine 120 contribute to the 5-phospho-alpha-D-ribose 1-diphosphate site; these read GD, NVST, and KHGNRSVSS. Anthranilate is bound at residue glycine 80. Serine 92 provides a ligand contact to Mg(2+). Residue asparagine 111 participates in anthranilate binding. Arginine 166 serves as a coordination point for anthranilate. Positions 225 and 226 each coordinate Mg(2+).

The protein belongs to the anthranilate phosphoribosyltransferase family. Homodimer. Requires Mg(2+) as cofactor.

It carries out the reaction N-(5-phospho-beta-D-ribosyl)anthranilate + diphosphate = 5-phospho-alpha-D-ribose 1-diphosphate + anthranilate. It participates in amino-acid biosynthesis; L-tryptophan biosynthesis; L-tryptophan from chorismate: step 2/5. Catalyzes the transfer of the phosphoribosyl group of 5-phosphorylribose-1-pyrophosphate (PRPP) to anthranilate to yield N-(5'-phosphoribosyl)-anthranilate (PRA). This Legionella pneumophila (strain Paris) protein is Anthranilate phosphoribosyltransferase.